We begin with the raw amino-acid sequence, 278 residues long: 4-deoxy-L-threo-5-hexosulose-uronate ketol-isomerase (278 aa).

4 residues coordinate Zn(2+): His-196, His-198, Glu-203, and His-245.

This sequence belongs to the KduI family. Requires Zn(2+) as cofactor.

It carries out the reaction 5-dehydro-4-deoxy-D-glucuronate = 3-deoxy-D-glycero-2,5-hexodiulosonate. Its pathway is glycan metabolism; pectin degradation; 2-dehydro-3-deoxy-D-gluconate from pectin: step 4/5. Catalyzes the isomerization of 5-dehydro-4-deoxy-D-glucuronate to 3-deoxy-D-glycero-2,5-hexodiulosonate. The sequence is that of 4-deoxy-L-threo-5-hexosulose-uronate ketol-isomerase from Yersinia enterocolitica serotype O:8 / biotype 1B (strain NCTC 13174 / 8081).